A 491-amino-acid polypeptide reads, in one-letter code: Argininosuccinate lyase (491 aa).

This sequence belongs to the lyase 1 family. Argininosuccinate lyase subfamily.

The protein resides in the cytoplasm. It carries out the reaction 2-(N(omega)-L-arginino)succinate = fumarate + L-arginine. The protein operates within amino-acid biosynthesis; L-arginine biosynthesis; L-arginine from L-ornithine and carbamoyl phosphate: step 3/3. The sequence is that of Argininosuccinate lyase from Methanococcoides burtonii (strain DSM 6242 / NBRC 107633 / OCM 468 / ACE-M).